A 90-amino-acid polypeptide reads, in one-letter code: Movement protein (90 aa).

Residues 32–52 (FVFVTFGLLIAVGVAWLAYTL) traverse the membrane as a helical segment.

It belongs to the mastrevirus movement protein family. Interacts with the capsid protein (CP). Part of a MP-CP-viral DNA complex.

Its subcellular location is the host membrane. Its function is as follows. Involved in the viral transport within, and between cells. The sequence is that of Movement protein from Wheat dwarf virus (isolate Sweden) (WDV).